Consider the following 178-residue polypeptide: Protein GrpE (178 aa).

Residues 1–11 (MSENQNPPPSP) are compositionally biased toward pro residues. The interval 1–23 (MSENQNPPPSPEEIEAAMSANAA) is disordered.

Belongs to the GrpE family. Homodimer.

It localises to the cytoplasm. In terms of biological role, participates actively in the response to hyperosmotic and heat shock by preventing the aggregation of stress-denatured proteins, in association with DnaK and GrpE. It is the nucleotide exchange factor for DnaK and may function as a thermosensor. Unfolded proteins bind initially to DnaJ; upon interaction with the DnaJ-bound protein, DnaK hydrolyzes its bound ATP, resulting in the formation of a stable complex. GrpE releases ADP from DnaK; ATP binding to DnaK triggers the release of the substrate protein, thus completing the reaction cycle. Several rounds of ATP-dependent interactions between DnaJ, DnaK and GrpE are required for fully efficient folding. This is Protein GrpE from Acidovorax sp. (strain JS42).